Reading from the N-terminus, the 483-residue chain is Protein nucleotidyltransferase YdiU (483 aa).

Residues Gly81, Gly83, Arg84, Lys103, Asp115, Gly116, Arg166, and Arg173 each contribute to the ATP site. Asp244 functions as the Proton acceptor in the catalytic mechanism. Mg(2+)-binding residues include Asn245 and Asp254. Asp254 contributes to the ATP binding site.

Belongs to the SELO family. It depends on Mg(2+) as a cofactor. The cofactor is Mn(2+).

The enzyme catalyses L-seryl-[protein] + ATP = 3-O-(5'-adenylyl)-L-seryl-[protein] + diphosphate. It carries out the reaction L-threonyl-[protein] + ATP = 3-O-(5'-adenylyl)-L-threonyl-[protein] + diphosphate. It catalyses the reaction L-tyrosyl-[protein] + ATP = O-(5'-adenylyl)-L-tyrosyl-[protein] + diphosphate. The catalysed reaction is L-histidyl-[protein] + UTP = N(tele)-(5'-uridylyl)-L-histidyl-[protein] + diphosphate. The enzyme catalyses L-seryl-[protein] + UTP = O-(5'-uridylyl)-L-seryl-[protein] + diphosphate. It carries out the reaction L-tyrosyl-[protein] + UTP = O-(5'-uridylyl)-L-tyrosyl-[protein] + diphosphate. Nucleotidyltransferase involved in the post-translational modification of proteins. It can catalyze the addition of adenosine monophosphate (AMP) or uridine monophosphate (UMP) to a protein, resulting in modifications known as AMPylation and UMPylation. This is Protein nucleotidyltransferase YdiU from Shewanella halifaxensis (strain HAW-EB4).